The chain runs to 165 residues: Phosphopantetheine adenylyltransferase (165 aa).

Substrate is bound at residue Ser10. ATP contacts are provided by residues Ser10–Phe11 and His18. The substrate site is built by Lys42, Thr79, and Arg93. ATP-binding positions include Gly94–Arg96, Glu104, and Val129–Thr135.

This sequence belongs to the bacterial CoaD family. Homohexamer. Mg(2+) serves as cofactor.

It localises to the cytoplasm. It catalyses the reaction (R)-4'-phosphopantetheine + ATP + H(+) = 3'-dephospho-CoA + diphosphate. Its pathway is cofactor biosynthesis; coenzyme A biosynthesis; CoA from (R)-pantothenate: step 4/5. Functionally, reversibly transfers an adenylyl group from ATP to 4'-phosphopantetheine, yielding dephospho-CoA (dPCoA) and pyrophosphate. This Rhodopseudomonas palustris (strain BisB5) protein is Phosphopantetheine adenylyltransferase.